A 1233-amino-acid chain; its full sequence is Mitogen-activated protein kinase kinase kinase kinase 4 (1233 aa).

The residue at position 2 (A2) is an N-acetylalanine. S5 is subject to Phosphoserine. One can recognise a Protein kinase domain in the interval F25–R289. ATP-binding positions include V31–V39 and K53. The Proton acceptor role is filled by D152. Disordered stretches follow at residues I305–E348, Q401–E463, and Q489–S805. The span at D316–G337 shows a compositional bias: acidic residues. 2 positions are modified to phosphoserine: S323 and S325. Residues P521–Q537 are compositionally biased toward basic and acidic residues. Position 543 is a phosphoserine (S543). Residues L544–D559 show a composition bias toward polar residues. A phosphoserine mark is found at S619, S621, S629, and S646. Residues L654–V663 show a composition bias toward basic and acidic residues. Residues P666–G692 show a composition bias toward low complexity. Phosphoserine is present on residues S691, S703, and S706. Basic and acidic residues-rich tracts occupy residues S713 to R726 and K741 to T756. Residues G766–D781 show a composition bias toward acidic residues. Residues S783–T803 show a composition bias toward polar residues. 5 positions are modified to phosphoserine: S785, S794, S795, S799, and S817. Phosphothreonine is present on T822. Phosphoserine occurs at positions 846, 849, 894, and 907. The segment at P852 to K1206 is mediates interaction with RAP2A. The region spanning N920–V1207 is the CNH domain.

It belongs to the protein kinase superfamily. STE Ser/Thr protein kinase family. STE20 subfamily. In terms of assembly, interacts with the SH3 domain of the adapter proteins Nck. Interacts (via its CNH regulatory domain) with ATL1 (via the N-terminal region). Interacts with RAP2A (GTP-bound form preferentially). The cofactor is Mg(2+). Appears to be ubiquitous, expressed in all tissue types examined. Highest levels observed in heart and brain.

The protein resides in the cytoplasm. The catalysed reaction is L-seryl-[protein] + ATP = O-phospho-L-seryl-[protein] + ADP + H(+). It carries out the reaction L-threonyl-[protein] + ATP = O-phospho-L-threonyl-[protein] + ADP + H(+). Serine/threonine kinase that plays a role in the response to environmental stress and cytokines such as TNF-alpha. Appears to act upstream of the JUN N-terminal pathway. Activator of the Hippo signaling pathway which plays a pivotal role in organ size control and tumor suppression by restricting proliferation and promoting apoptosis. MAP4Ks act in parallel to and are partially redundant with STK3/MST2 and STK4/MST2 in the phosphorylation and activation of LATS1/2, and establish MAP4Ks as components of the expanded Hippo pathway. Phosphorylates SMAD1 on Thr-322. This Mus musculus (Mouse) protein is Mitogen-activated protein kinase kinase kinase kinase 4 (Map4k4).